The sequence spans 334 residues: MKDLRFGRLKCYSLHLGILPLTVLVLVFFCFVCLSLRSQEWGHPGAVNRKAYPQPRVLTPTRTDVLVLTPWLAPIIWEGTFDIDTLNEQFRLRNTTIGLTVFAVKKYVVFLKLFLETAEQHFMVGHKVIYYVFTDRPADVPQVPLGAGRRLVVLTVRNYTRWQDVSMHRMEVISHFSEQRFRHEVDYLVCADVDMKFRDHVGVEILSALFGTLHPGFYRSRRESFTYERRPQSQAYIPWDQGDFYYMGAFFGGSVVEVHHLTKACHQAMVEDQANGIEAVWHDESHLNKYLLYHKPTKVLSPEYMWDQQLLGWPSIMKKLRYVAVPKNHQAIRN.

At 1-15 the chain is on the cytoplasmic side; that stretch reads MKDLRFGRLKCYSLH. Residues 16-36 form a helical; Signal-anchor for type II membrane protein membrane-spanning segment; it reads LGILPLTVLVLVFFCFVCLSL. Residues 37-334 lie on the Lumenal side of the membrane; it reads RSQEWGHPGA…VPKNHQAIRN (298 aa). The N-linked (GlcNAc...) asparagine glycan is linked to Asn-94. UDP-N-acetyl-alpha-D-galactosamine contacts are provided by residues 102-104, Tyr-107, and 192-194; these read FAV and DVD. Residues Asp-192 and Asp-194 each coordinate Mn(2+). Residues His-214, Thr-226, Glu-284, and Asp-307 each coordinate an alpha-L-fucosyl-(1-&gt;2)-beta-D-galactosyl derivative. Glu-284 functions as the Nucleophile in the catalytic mechanism.

It belongs to the glycosyltransferase 6 family. The cofactor is Mn(2+). As to expression, large intestine, caecum, stomach, pancreas, submaxillary gland and kidney (at protein level). Ubiquitous.

Its subcellular location is the golgi apparatus. The protein resides in the golgi stack membrane. The protein localises to the secreted. It catalyses the reaction an alpha-L-fucosyl-(1-&gt;2)-beta-D-galactosyl derivative + UDP-N-acetyl-alpha-D-galactosamine = an N-acetyl-alpha-D-galactosaminyl-(1-&gt;3)-[alpha-L-fucosyl-(1-&gt;2)]-beta-D-galactosyl derivative + UDP + H(+). The enzyme catalyses an alpha-L-fucosyl-(1-&gt;2)-beta-D-galactosyl derivative + UDP-alpha-D-galactose = an alpha-D-galactosyl-(1-&gt;3)-[alpha-L-fucosyl-(1-&gt;2)]-beta-D-galactosyl derivative + UDP + H(+). The protein operates within protein modification; protein glycosylation. Its function is as follows. Possesses strong B transferase activity and weak A transferase activity. In Rattus norvegicus (Rat), this protein is Histo-blood group ABO system transferase 2 (Abo2).